Here is a 111-residue protein sequence, read N- to C-terminus: Cytochrome c oxidase subunit 7A2-like, mitochondrial (111 aa).

Residues 1 to 54 (MYYKFSSFTQKLAGAWASEAYTPQGLKPVSTEAPPIIFATPTKLTSSVTAYDYS) constitute a mitochondrion transit peptide. Lys68 is modified (N6-acetyllysine). The chain crosses the membrane as a helical span at residues 79–104 (PDQMLYRTTMALTLGGTIYCLIALYM).

It belongs to the cytochrome c oxidase VIIa family.

It localises to the mitochondrion inner membrane. Its function is as follows. Non-functional protein. In contrast to the protein found in other strains (AC Q99KD6), cannot induce the assembly of mitochondrial respiratory supercomplexes. The chain is Cytochrome c oxidase subunit 7A2-like, mitochondrial from Mus musculus (Mouse).